The following is a 302-amino-acid chain: Coiled-coil domain-containing protein 2 (302 aa).

The signal sequence occupies residues 1–22; it reads MKNFGLLVVCLSLATLVIPSDG. Positions 198–234 form a coiled coil; the sequence is FADAMEKKAEALENAAEAAAEYISDQSEEVDDLSEEV. The interval 221 to 257 is disordered; sequence SDQSEEVDDLSEEVLDDDSDENDSTSSESEVEDSDVD. Positions 223 to 257 are enriched in acidic residues; it reads QSEEVDDLSEEVLDDDSDENDSTSSESEVEDSDVD. N-linked (GlcNAc...) asparagine glycosylation occurs at Asn-242.

In terms of tissue distribution, component of the acid-insoluble organic matrix of calcified layers of the shell (at protein level).

It is found in the secreted. This is Coiled-coil domain-containing protein 2 from Lottia gigantea (Giant owl limpet).